The sequence spans 633 residues: MKAIKKSLTEEEYLYLDFSHQTKGCIFPLHTSVTLFLLSYCDCKIFKICLVVTKEVSTDSSLLRDDLIQDVEIQIISRQELPPIVQNCCLPAVVERSDNFCRAGLAVVLRHIIQKSYEADPLKKELLELLGFKKTCLKACAEVSQWTRLCELTIPLAIENFLRESSDQPPTIPVEILQLEKKLSEPVRVHNDDKLRRQKLKQQKADGVGPPLTKGKAKSKVHTQETSEELDSSSESLELKVAFSKLTVQEEPATTNREPSHIRKAKASDLPPLEHVFAEGLYFTLADIVLLPCIHHFLVIICKKFSEKLVEFPLLASWYQRIQEVPRVKTAASKCGIQFLHLPKLLTVSTEQRPNLSEVPGVEGHSDPLFIGGPRPTMAKLMEKGIEVMFSPHPCPTWTVDWNVLPAAVSPKEGKMSSDRALRKQQQLNNLVYVVTNQAKPGDRIVDFCSGGGHVGIVLAHMLPSCQVTLIENKELSLIRAKKRSDELGLSNIWFIQANMEYFTGMFNIGVALHACGVATDMVIEHCIKTRASFVTCPCCYGFIQNTSKFNFPKSEQFKKTLSYKEHMILCRFADQTAVQLPPQRRLIGKQCMCLVDLDRARAAEECGYSVQVISMEPESCSPKNNMIVGVPI.

One can recognise a GST C-terminal domain in the interval 130–332; that stretch reads LGFKKTCLKA…QEVPRVKTAA (203 aa). The disordered stretch occupies residues 190 to 232; it reads HNDDKLRRQKLKQQKADGVGPPLTKGKAKSKVHTQETSEELDS. A Phosphoserine modification is found at serine 233.

This sequence belongs to the GSTCD family.

The protein resides in the cytoplasm. This is Glutathione S-transferase C-terminal domain-containing protein (GSTCD) from Macaca fascicularis (Crab-eating macaque).